We begin with the raw amino-acid sequence, 565 residues long: Dihydroxy-acid dehydratase (565 aa).

Position 80 (aspartate 80) interacts with Mg(2+). Residue cysteine 121 participates in [2Fe-2S] cluster binding. Mg(2+) is bound by residues aspartate 122 and lysine 123. The residue at position 123 (lysine 123) is an N6-carboxylysine. Cysteine 194 provides a ligand contact to [2Fe-2S] cluster. Residue glutamate 447 participates in Mg(2+) binding. Serine 473 acts as the Proton acceptor in catalysis.

The protein belongs to the IlvD/Edd family. As to quaternary structure, homodimer. It depends on [2Fe-2S] cluster as a cofactor. The cofactor is Mg(2+).

The enzyme catalyses (2R)-2,3-dihydroxy-3-methylbutanoate = 3-methyl-2-oxobutanoate + H2O. It catalyses the reaction (2R,3R)-2,3-dihydroxy-3-methylpentanoate = (S)-3-methyl-2-oxopentanoate + H2O. The protein operates within amino-acid biosynthesis; L-isoleucine biosynthesis; L-isoleucine from 2-oxobutanoate: step 3/4. It participates in amino-acid biosynthesis; L-valine biosynthesis; L-valine from pyruvate: step 3/4. Its function is as follows. Functions in the biosynthesis of branched-chain amino acids. Catalyzes the dehydration of (2R,3R)-2,3-dihydroxy-3-methylpentanoate (2,3-dihydroxy-3-methylvalerate) into 2-oxo-3-methylpentanoate (2-oxo-3-methylvalerate) and of (2R)-2,3-dihydroxy-3-methylbutanoate (2,3-dihydroxyisovalerate) into 2-oxo-3-methylbutanoate (2-oxoisovalerate), the penultimate precursor to L-isoleucine and L-valine, respectively. The protein is Dihydroxy-acid dehydratase of Pelodictyon phaeoclathratiforme (strain DSM 5477 / BU-1).